A 383-amino-acid polypeptide reads, in one-letter code: Presenilin-associated rhomboid-like protein A, mitochondrial (383 aa).

The transit peptide at 1–37 (MAWRSCFMKWTQINSINASSLCPKSTRLNIHPQQRCG) directs the protein to the mitochondrion. Positions 35–75 (RCGFRKTERPSESKKGVQETEAEAGGHNRAVPPKPVPPLPP) are disordered. The Mitochondrial matrix segment spans residues 38–83 (FRKTERPSESKKGVQETEAEAGGHNRAVPPKPVPPLPPRRPHQLFR). Residues 39 to 52 (RKTERPSESKKGVQ) show a composition bias toward basic and acidic residues. A compositionally biased stretch (pro residues) spans 66–75 (PPKPVPPLPP). Residues 84–104 (PLVFTVGFTGCSFGAAAILQY) form a helical membrane-spanning segment. Residues 105-168 (ESVKSRVQLA…FWSGLSEGQK (64 aa)) are Mitochondrial intermembrane-facing. Residues 169 to 189 (TVTGIIALNTVVLCCWRVPAM) form a helical membrane-spanning segment. The Mitochondrial matrix portion of the chain corresponds to 190–219 (QRFLVKYFTSNPASKTRCLPMVLSSFSHYS). A helical membrane pass occupies residues 220–240 (VIHMVVNMYVLWTFSSSIVSL). The Mitochondrial intermembrane portion of the chain corresponds to 241–245 (LGREQ). A helical transmembrane segment spans residues 246–266 (FLALYLSGGVISTFVSYVFKT). Residues 267–271 (ATGRL) lie on the Mitochondrial matrix side of the membrane. A helical transmembrane segment spans residues 272–292 (GPSLGASGSIMTVLAAVCTKI). Residue S278 is the Nucleophile of the active site. At 293–298 (PEAKLG) the chain is on the mitochondrial intermembrane side. The helical transmembrane segment at 299–319 (IVLLPVISFSAGNALKALVAL) threads the bilayer. At 320–334 (DIAGLVLGWRFFDHA) the chain is on the mitochondrial matrix side. A helical membrane pass occupies residues 335–355 (AHLGGALFGVWYIGYGHELIW). The active site involves H336. At 356 to 383 (RKREPLIKFWHELRNMSPGRPGPGGGGG) the chain is on the mitochondrial intermembrane side.

This sequence belongs to the peptidase S54 family.

The protein localises to the mitochondrion inner membrane. It carries out the reaction Cleaves type-1 transmembrane domains using a catalytic dyad composed of serine and histidine that are contributed by different transmembrane domains.. Functionally, required for the control of apoptosis during postnatal growth. Essential for proteolytic processing of an antiapoptotic form of opa1 which prevents the release of mitochondrial cytochrome c in response to intrinsic apoptotic signals. The protein is Presenilin-associated rhomboid-like protein A, mitochondrial (parla) of Danio rerio (Zebrafish).